The following is a 361-amino-acid chain: 4-hydroxytryptamine kinase (361 aa).

ATP-binding positions include N37, K57, and 118–120; that span reads QDV. Residue D224 is part of the active site. ATP is bound at residue 248-250; it reads DWE.

It belongs to the methylthioribose kinase family. As to quaternary structure, monomer. The cofactor is Mg(2+).

It carries out the reaction 4-hydroxytryptamine + ATP = norbaeocystin + ADP + H(+). The enzyme catalyses psilocin + ATP = psilocybin + ADP + H(+). It catalyses the reaction 4-hydroxy-N,N,N-trimethyltryptamine + ATP = aeruginascin + ADP + H(+). The protein operates within secondary metabolite biosynthesis. 4-hydroxytryptamine kinase; part of the gene cluster that mediates the biosynthesis of psilocybin, a psychotropic tryptamine-derived natural product. The first step in the pathway is the decarboxylation of L-tryptophan to tryptamine by the decarboxylase psiD. PsiD does not decarboxylate phenylalanine, tyrosine, or 5-hydroxy- L -tryptophan (5-HTP). 4-hydroxy-L-tryptophan is accepted as substrate by psiD as well. The cytochrome P450 monooxygenase psiH then converts tryptamine to 4-hydroxytryptamine. The kinase psiK catalyzes the 4-O-phosphorylation step by converting 4-hydroxytryptamine into norbaeocystin. The methyltransferase psiM then catalyzes iterative methyl transfer to the amino group of norbaeocystin to yield psilocybin via a monomethylated intermediate, baeocystin. 4-hydroxy-6-methyl-l-tryptophancan also be converted the decarboxylase PsiD, kinase PsiK, and methyltransferase PsiM into respectively 6-methyl-norbaeocystin, 6-methylbaeocystin, and 6-methylpsilocybin. PsiK kinase can also turn psilocin into psilocybin. This activity may represent a protective mechanism to rephosphorylate the unstable psilocin to the stable psilocybin in case of intracellular ester cleavage. Moreover, psiK is able to O-phosphorylate the quaternary amine 4-hydroxy-N,N,N-trimethyltryptamine (4-OH-TMT) to yield aeruginascin, another bioactive compound found in Psilocybe species. The polypeptide is 4-hydroxytryptamine kinase (Psilocybe cyanescens).